A 437-amino-acid chain; its full sequence is Glutamyl-tRNA reductase (437 aa).

Substrate is bound by residues 49–52 (TCNR), Ser-109, 114–116 (ETQ), and Gln-120. The active-site Nucleophile is the Cys-50. 189 to 194 (GAGEMS) is an NADP(+) binding site.

The protein belongs to the glutamyl-tRNA reductase family. Homodimer.

The enzyme catalyses (S)-4-amino-5-oxopentanoate + tRNA(Glu) + NADP(+) = L-glutamyl-tRNA(Glu) + NADPH + H(+). Its pathway is porphyrin-containing compound metabolism; protoporphyrin-IX biosynthesis; 5-aminolevulinate from L-glutamyl-tRNA(Glu): step 1/2. Its function is as follows. Catalyzes the NADPH-dependent reduction of glutamyl-tRNA(Glu) to glutamate 1-semialdehyde (GSA). In Listeria welshimeri serovar 6b (strain ATCC 35897 / DSM 20650 / CCUG 15529 / CIP 8149 / NCTC 11857 / SLCC 5334 / V8), this protein is Glutamyl-tRNA reductase.